We begin with the raw amino-acid sequence, 498 residues long: ATP synthase subunit beta, chloroplastic (498 aa).

172-179 (GGAGVGKT) serves as a coordination point for ATP.

This sequence belongs to the ATPase alpha/beta chains family. In terms of assembly, F-type ATPases have 2 components, CF(1) - the catalytic core - and CF(0) - the membrane proton channel. CF(1) has five subunits: alpha(3), beta(3), gamma(1), delta(1), epsilon(1). CF(0) has four main subunits: a(1), b(1), b'(1) and c(9-12).

It is found in the plastid. The protein localises to the chloroplast thylakoid membrane. It carries out the reaction ATP + H2O + 4 H(+)(in) = ADP + phosphate + 5 H(+)(out). Its function is as follows. Produces ATP from ADP in the presence of a proton gradient across the membrane. The catalytic sites are hosted primarily by the beta subunits. This is ATP synthase subunit beta, chloroplastic from Lactuca sativa (Garden lettuce).